The chain runs to 541 residues: 3-oxoacyl-[acyl-carrier-protein] synthase II, chloroplastic (541 aa).

The transit peptide at 1-103 (MVGASSSYAS…NRNQRRLNRA (103 aa)) directs the protein to the chloroplast. In terms of domain architecture, Ketosynthase family 3 (KS3) spans 129–539 (QRRVVVTGMG…GHNSSIIFAP (411 aa)). Active-site for beta-ketoacyl synthase activity residues include Cys292, His432, and His468.

The protein belongs to the thiolase-like superfamily. Beta-ketoacyl-ACP synthases family. As to quaternary structure, homodimer. As to expression, mostly expressed in siliques, and, to a lower extent, in leaves, stems, flower buds, and flowers.

The protein localises to the plastid. It localises to the chloroplast stroma. The catalysed reaction is a fatty acyl-[ACP] + malonyl-[ACP] + H(+) = a 3-oxoacyl-[ACP] + holo-[ACP] + CO2. Functionally, essential protein that catalyzes the condensation reaction of fatty acid synthesis by the addition to an acyl acceptor of two carbons from malonyl-ACP. Specific for elongation from C-16 and C-16 to unsaturated C-18 fatty acids. Confers resistance to low temperatures by maintaining chloroplast membranes integrity. Involved in the regulation of fatty acids ratios during seed metabolism. Required for embryo development, especially at the transition from the globular to the heart stage. The protein is 3-oxoacyl-[acyl-carrier-protein] synthase II, chloroplastic (KAS2) of Arabidopsis thaliana (Mouse-ear cress).